We begin with the raw amino-acid sequence, 506 residues long: Histone deacetylase complex subunit CTI6 (506 aa).

The interval 49-71 (EESVKQEDVPMEGGEGEVEEEEG) is disordered. Residues 62-71 (GEGEVEEEEG) show a composition bias toward acidic residues. The PHD-type zinc finger occupies 72 to 123 (ETRCICGELDTPDDSGFFIQCEQCSSWQHGYCVSITQDNAPDKYWCEQCRPE). Residues 138–425 (IYKPVQEKRR…KPRLPPQRTS (288 aa)) are disordered. Phosphothreonine is present on threonine 174. Serine 175 carries the phosphoserine modification. Threonine 177 is subject to Phosphothreonine. Residues 179 to 195 (DNVDDIGDEEDEVEDEA) are compositionally biased toward acidic residues. Residues serine 216 and serine 267 each carry the phosphoserine modification. 2 stretches are compositionally biased toward basic and acidic residues: residues 231–271 (DSDK…HQED) and 312–342 (DDMK…EKES). The segment covering 373–393 (ASSRGSKRVSKPARKGNRTRR) has biased composition (basic residues). Positions 394–404 (SNTSSDTNQNR) are enriched in polar residues. Residues 405–415 (RSADIGTDKPV) show a composition bias toward basic and acidic residues.

As to quaternary structure, component of the RPD3C(L) complex composed of at least ASH1, CTI6, DEP1, PHO23, RPD3, RXT2, RXT3, SAP30, SDS3, SIN3, UME1 and UME6. Interacts with CYC8.

It localises to the nucleus. Component of the RPD3C(L) histone deacetylase complex (HDAC). Responsible for the deacetylation of lysine residues on the N-terminal part of the core histones (H2A, H2B, H3 and H4). Histone deacetylation gives a tag for epigenetic repression and plays an important role in transcriptional regulation, cell cycle progression and developmental events. CTI6 links the SAGA coactivator to the CYC8-TUP1 corepressor. Involved in transcription regulation of heme-regulated genes and required for GCN5 recruitment, histone H3 acetylation and SPT15/TBP binding to promoters. The polypeptide is Histone deacetylase complex subunit CTI6 (CTI6) (Saccharomyces cerevisiae (strain ATCC 204508 / S288c) (Baker's yeast)).